The chain runs to 254 residues: Hemin import ATP-binding protein HmuV (254 aa).

An ABC transporter domain is found at 2–239; that stretch reads LNINQVNINL…DTLSQVWHYD (238 aa). ATP is bound at residue 34–41; the sequence is GPNGAGKS.

The protein belongs to the ABC transporter superfamily. Heme (hemin) importer (TC 3.A.1.14.5) family. As to quaternary structure, the complex is composed of two ATP-binding proteins (HmuV), two transmembrane proteins (HmuU) and a solute-binding protein (HmuT).

It localises to the cell inner membrane. In terms of biological role, part of the ABC transporter complex HmuTUV involved in hemin import. Responsible for energy coupling to the transport system. This Shewanella denitrificans (strain OS217 / ATCC BAA-1090 / DSM 15013) protein is Hemin import ATP-binding protein HmuV.